Here is a 340-residue protein sequence, read N- to C-terminus: Phenylalanine--tRNA ligase alpha subunit (340 aa).

Glu-254 is a Mg(2+) binding site.

The protein belongs to the class-II aminoacyl-tRNA synthetase family. Phe-tRNA synthetase alpha subunit type 1 subfamily. Tetramer of two alpha and two beta subunits. Mg(2+) serves as cofactor.

It is found in the cytoplasm. The catalysed reaction is tRNA(Phe) + L-phenylalanine + ATP = L-phenylalanyl-tRNA(Phe) + AMP + diphosphate + H(+). This chain is Phenylalanine--tRNA ligase alpha subunit, found in Caldicellulosiruptor bescii (strain ATCC BAA-1888 / DSM 6725 / KCTC 15123 / Z-1320) (Anaerocellum thermophilum).